The chain runs to 314 residues: RNA 2',3'-cyclic phosphodiesterase (314 aa).

The active-site Proton donor is histidine 43. 2 short sequence motifs (HXTX) span residues 43–46 (HITL) and 129–132 (HITI). Histidine 129 acts as the Proton acceptor in catalysis.

This sequence belongs to the 2H phosphoesterase superfamily. ThpR family.

The catalysed reaction is a 3'-end 2',3'-cyclophospho-ribonucleotide-RNA + H2O = a 3'-end 2'-phospho-ribonucleotide-RNA + H(+). Hydrolyzes RNA 2',3'-cyclic phosphodiester to an RNA 2'-phosphomonoester. In Geobacillus stearothermophilus (Bacillus stearothermophilus), this protein is RNA 2',3'-cyclic phosphodiesterase.